Reading from the N-terminus, the 62-residue chain is Conotoxin Lt5.5 (62 aa).

An N-terminal signal peptide occupies residues 1–22 (MRCLQVFIIFLLLIPSPPSVDA). Positions 23–48 (QRKTKDDVPLASFHDNAKRTLKRLWN) are excised as a propeptide.

It belongs to the conotoxin T superfamily. In terms of processing, contains 2 disulfide bonds that can be either 'C1-C3, C2-C4' or 'C1-C4, C2-C3', since these disulfide connectivities have been observed for conotoxins with cysteine framework V (for examples, see AC P0DQQ7 and AC P81755). Expressed by the venom duct.

Its subcellular location is the secreted. The chain is Conotoxin Lt5.5 from Conus litteratus (Lettered cone).